The chain runs to 559 residues: Glucose-6-phosphate isomerase 2 (559 aa).

Glu-367 (proton donor) is an active-site residue. Active-site residues include His-398 and Lys-522.

The protein belongs to the GPI family.

It is found in the cytoplasm. It carries out the reaction alpha-D-glucose 6-phosphate = beta-D-fructose 6-phosphate. Its pathway is carbohydrate biosynthesis; gluconeogenesis. It functions in the pathway carbohydrate degradation; glycolysis; D-glyceraldehyde 3-phosphate and glycerone phosphate from D-glucose: step 2/4. Catalyzes the reversible isomerization of glucose-6-phosphate to fructose-6-phosphate. The protein is Glucose-6-phosphate isomerase 2 of Chromohalobacter salexigens (strain ATCC BAA-138 / DSM 3043 / CIP 106854 / NCIMB 13768 / 1H11).